The sequence spans 302 residues: HTH-type transcriptional regulator ArgP (302 aa).

An HTH lysR-type domain is found at 4–60; the sequence is PDYRTLQALDAVIRERGFERAAQKLCITQSAVSQRIKQLENLFGQPLLVRTVPPRPT. A DNA-binding region (H-T-H motif) is located at residues 21–40; the sequence is FERAAQKLCITQSAVSQRIK.

It belongs to the LysR transcriptional regulatory family. In terms of assembly, homodimer.

Its function is as follows. Controls the transcription of genes involved in arginine and lysine metabolism. This chain is HTH-type transcriptional regulator ArgP, found in Yersinia pseudotuberculosis serotype O:1b (strain IP 31758).